The primary structure comprises 315 residues: Aspartate carbamoyltransferase catalytic subunit (315 aa).

Carbamoyl phosphate contacts are provided by R54 and T55. K82 contacts L-aspartate. R104, H134, and Q137 together coordinate carbamoyl phosphate. The L-aspartate site is built by R174 and R229. Carbamoyl phosphate-binding residues include G270 and P271.

It belongs to the aspartate/ornithine carbamoyltransferase superfamily. ATCase family. As to quaternary structure, heterododecamer (2C3:3R2) of six catalytic PyrB chains organized as two trimers (C3), and six regulatory PyrI chains organized as three dimers (R2).

The enzyme catalyses carbamoyl phosphate + L-aspartate = N-carbamoyl-L-aspartate + phosphate + H(+). The protein operates within pyrimidine metabolism; UMP biosynthesis via de novo pathway; (S)-dihydroorotate from bicarbonate: step 2/3. Functionally, catalyzes the condensation of carbamoyl phosphate and aspartate to form carbamoyl aspartate and inorganic phosphate, the committed step in the de novo pyrimidine nucleotide biosynthesis pathway. In Leifsonia xyli subsp. xyli (strain CTCB07), this protein is Aspartate carbamoyltransferase catalytic subunit.